The chain runs to 21 residues: Endo-1,4-beta-xylanase A (21 aa).

The protein belongs to the glycosyl hydrolase 10 (cellulase F) family.

It catalyses the reaction Endohydrolysis of (1-&gt;4)-beta-D-xylosidic linkages in xylans.. The protein operates within glycan degradation; xylan degradation. The polypeptide is Endo-1,4-beta-xylanase A (Dictyoglomus sp. (strain B4A)).